Consider the following 30-residue polypeptide: Cycloviolacin-H1 (30 aa).

The cyclopeptide (Gly-Asn) cross-link spans 1–30 (GIPCGESCVYIPCLTSAIGCSCKSKVCYRN). Intrachain disulfides connect C4-C20, C8-C22, and C13-C27.

This sequence belongs to the cyclotide family. Bracelet subfamily. Post-translationally, this is a cyclic peptide.

Functionally, probably participates in a plant defense mechanism. This chain is Cycloviolacin-H1, found in Viola hederacea (Australian violet).